Reading from the N-terminus, the 244-residue chain is Lymphotoxin-beta (244 aa).

The Cytoplasmic portion of the chain corresponds to 1–18; sequence MGALGLEGRGGRLQGRGS. A helical; Signal-anchor for type II membrane protein membrane pass occupies residues 19–48; the sequence is LLLAVAGATSLVTLLLAVPITVLAVLALVP. Residues 49-244 lie on the Extracellular side of the membrane; that stretch reads QDQGGLVTDT…KTFFGAVMVG (196 aa). One can recognise a THD domain in the interval 88–243; the sequence is PAAHLIGAPL…GKTFFGAVMV (156 aa). N-linked (GlcNAc...) asparagine glycosylation is present at Asn222.

It belongs to the tumor necrosis factor family. As to quaternary structure, heterotrimer of either two LTB and one LTA subunits or (less prevalent) two LTA and one LTB subunits.

The protein resides in the membrane. Its function is as follows. Cytokine that binds to LTBR/TNFRSF3. May play a specific role in immune response regulation. Provides the membrane anchor for the attachment of the heterotrimeric complex to the cell surface. This chain is Lymphotoxin-beta (LTB), found in Macaca mulatta (Rhesus macaque).